A 1030-amino-acid polypeptide reads, in one-letter code: Tricorn protease (1030 aa).

A six-bladed beta propeller region spans residues 1–270 (MANLLQNPDI…DNVKSLDIGP (270 aa)). A binds the substrate's C-terminus region spans residues 93 to 94 (RR). The interval 286-635 (LEDFSMSPGD…EEEKSLNIDA (350 aa)) is seven-bladed beta propeller. The interval 641–712 (NVKEDFAEMY…RTSHSYEMGG (72 aa)) is C-1. Histidine 706 acts as the Charge relay system in catalysis. Positions 721–816 (RAGRIACDFK…SGFVDVLQDD (96 aa)) are PDZ-like. The tract at residues 817–1022 (RYIRYRAWVE…IEMVLADLEK (206 aa)) is C-2. 877–879 (GGG) lines the substrate pocket. The Nucleophile role is filled by serine 926. Residue 954 to 956 (GIS) coordinates substrate. The Charge relay system role is filled by glutamate 984.

Belongs to the peptidase S41B family. In terms of assembly, part of the tricorn proteolytic complex.

It is found in the cytoplasm. Tricorn degrades oligopeptides in a sequential manner. This Thermoplasma volcanium (strain ATCC 51530 / DSM 4299 / JCM 9571 / NBRC 15438 / GSS1) protein is Tricorn protease (tri).